Consider the following 301-residue polypeptide: Hydroxyquinol 1,2-dioxygenase (301 aa).

Fe cation is bound by residues Tyr-169, Tyr-202, His-226, and His-228.

The protein belongs to the intradiol ring-cleavage dioxygenase family. The cofactor is Fe(3+).

It carries out the reaction benzene-1,2,4-triol + O2 = maleylacetate + 2 H(+). It functions in the pathway aromatic compound metabolism. Involved in resorcinol degradation. Catalyzes the conversion of hydroxyquinol to malelylacetate. Also shows weak activity with catechol, 3-methylcatechol and 4-methylcatechol, but cannot use 4-chlorocatechol, 4-nitrocatechol or protocatechuate. This is Hydroxyquinol 1,2-dioxygenase from Corynebacterium glutamicum (strain ATCC 13032 / DSM 20300 / JCM 1318 / BCRC 11384 / CCUG 27702 / LMG 3730 / NBRC 12168 / NCIMB 10025 / NRRL B-2784 / 534).